The primary structure comprises 96 residues: MEGFGSDFSVGGSSAGKVDTGAIMEQVKVQIAVANAQELLQRMTDKCFRKCIGKPGGSLDNSEQKCIAMCMDRYMDAWNTVSRAYNSRLQRERAKM.

The Twin CX3C motif signature appears at 47-70; that stretch reads CFRKCIGKPGGSLDNSEQKCIAMC. 2 disulfides stabilise this stretch: cysteine 47–cysteine 70 and cysteine 51–cysteine 66.

It belongs to the small Tim family. In terms of assembly, heterohexamer; composed of 3 copies of TIMM8 (TIMM8A or TIMM8B) and 3 copies of TIMM13, named soluble 70 kDa complex. Associates with the TIM22 complex, whose core is composed of TIMM22.

The protein resides in the mitochondrion inner membrane. In terms of biological role, mitochondrial intermembrane chaperone that participates in the import and insertion of some multi-pass transmembrane proteins into the mitochondrial inner membrane. Also required for the transfer of beta-barrel precursors from the TOM complex to the sorting and assembly machinery (SAM complex) of the outer membrane. Acts as a chaperone-like protein that protects the hydrophobic precursors from aggregation and guide them through the mitochondrial intermembrane space. The TIMM8-TIMM13 complex mediates the import of some proteins while the predominant TIMM9-TIMM10 70 kDa complex mediates the import of much more proteins. This is Mitochondrial import inner membrane translocase subunit Tim13-A (timm13-a) from Xenopus laevis (African clawed frog).